Here is a 308-residue protein sequence, read N- to C-terminus: Methionine synthase (308 aa).

Zn(2+) contacts are provided by His201, Cys203, Glu224, and Cys285.

It belongs to the archaeal MetE family. It depends on Zn(2+) as a cofactor.

Its pathway is amino-acid biosynthesis; L-methionine biosynthesis via de novo pathway. Functionally, catalyzes the transfer of a methyl group to L-homocysteine resulting in methionine formation. Can use methylcobalamin and methylcobinamide as methyl donors, but methylcobalamin is not considered to be the physiological substrate. The sequence is that of Methionine synthase from Methanothermobacter thermautotrophicus (strain ATCC 29096 / DSM 1053 / JCM 10044 / NBRC 100330 / Delta H) (Methanobacterium thermoautotrophicum).